Here is a 199-residue protein sequence, read N- to C-terminus: uncharacterized protein (199 aa).

3 helical membrane passes run 22-44 (VVVVGLYYGFLTTFSIGPSYLFL), 65-87 (TGFIAGQLMMFISIYYAPLHLAL), and 91-108 (HTITVLALPYLLFHFFFW).

Belongs to the ycf1 family.

It is found in the mitochondrion membrane. This is an uncharacterized protein from Arabidopsis thaliana (Mouse-ear cress).